A 159-amino-acid polypeptide reads, in one-letter code: Aspartate carbamoyltransferase regulatory chain (159 aa).

Zn(2+)-binding residues include Cys108, Cys113, Cys138, and Cys141.

It belongs to the PyrI family. Contains catalytic and regulatory chains. It depends on Zn(2+) as a cofactor.

Its function is as follows. Involved in allosteric regulation of aspartate carbamoyltransferase. The chain is Aspartate carbamoyltransferase regulatory chain from Thermofilum pendens (strain DSM 2475 / Hrk 5).